The chain runs to 99 residues: Ubiquitin-related modifier 1 homolog (99 aa).

Position 99 is a 1-thioglycine (Gly-99). Residue Gly-99 forms a Glycyl lysine isopeptide (Gly-Lys) (interchain with K-? in acceptor proteins) linkage.

The protein belongs to the URM1 family. As to quaternary structure, interacts with cer. In terms of processing, C-terminal thiocarboxylation occurs in 2 steps, it is first acyl-adenylated (-COAMP) via the hesA/moeB/thiF part of the MOCS3 homolog, then thiocarboxylated (-COSH) via the rhodanese domain of the MOCS3 homolog.

Its subcellular location is the cytoplasm. It functions in the pathway tRNA modification; 5-methoxycarbonylmethyl-2-thiouridine-tRNA biosynthesis. Its function is as follows. Acts as a sulfur carrier required for 2-thiolation of mcm(5)S(2)U at tRNA wobble positions of cytosolic tRNA(Lys), tRNA(Glu) and tRNA(Gln). Serves as sulfur donor in tRNA 2-thiolation reaction by being thiocarboxylated (-COSH) at its C-terminus by MOCS3. The sulfur is then transferred to tRNA to form 2-thiolation of mcm(5)S(2)U. Also acts as a ubiquitin-like protein (UBL) that is covalently conjugated via an isopeptide bond to lysine residues of target proteins such as Prx2/Jafrac1, Ciao1, Eip71CD and GILT1. The thiocarboxylated form serves as substrate for conjugation and oxidative stress specifically induces the formation of UBL-protein conjugates. The sequence is that of Ubiquitin-related modifier 1 homolog from Drosophila virilis (Fruit fly).